The chain runs to 429 residues: 4-hydroxybutyrate coenzyme A transferase (429 aa).

215–219 (GIGAI) lines the CoA pocket. The 5-glutamyl coenzyme A thioester intermediate role is filled by glutamate 238. Residue glycine 336 coordinates CoA.

It belongs to the acetyl-CoA hydrolase/transferase family.

This Clostridium kluyveri (strain ATCC 8527 / DSM 555 / NBRC 12016 / NCIMB 10680 / K1) protein is 4-hydroxybutyrate coenzyme A transferase (cat2).